We begin with the raw amino-acid sequence, 181 residues long: Adenine phosphoribosyltransferase (181 aa).

Belongs to the purine/pyrimidine phosphoribosyltransferase family. Homodimer.

It is found in the cytoplasm. The enzyme catalyses AMP + diphosphate = 5-phospho-alpha-D-ribose 1-diphosphate + adenine. The protein operates within purine metabolism; AMP biosynthesis via salvage pathway; AMP from adenine: step 1/1. Its function is as follows. Catalyzes a salvage reaction resulting in the formation of AMP, that is energically less costly than de novo synthesis. The sequence is that of Adenine phosphoribosyltransferase from Vibrio vulnificus (strain CMCP6).